We begin with the raw amino-acid sequence, 91 residues long: Acylphosphatase (91 aa).

The 88-residue stretch at 3–90 folds into the Acylphosphatase-like domain; that stretch reads RVLIRVKGKV…EIYLDFSITQ (88 aa). Catalysis depends on residues R18 and N36.

The protein belongs to the acylphosphatase family.

The catalysed reaction is an acyl phosphate + H2O = a carboxylate + phosphate + H(+). This Shewanella amazonensis (strain ATCC BAA-1098 / SB2B) protein is Acylphosphatase (acyP).